The following is a 66-amino-acid chain: Muscarinic toxin 1 (66 aa).

4 disulfides stabilise this stretch: Cys-3-Cys-24, Cys-17-Cys-42, Cys-46-Cys-58, and Cys-59-Cys-64.

Belongs to the three-finger toxin family. Short-chain subfamily. Aminergic toxin sub-subfamily. In terms of tissue distribution, expressed by the venom gland.

The protein resides in the secreted. Shows a non-competitive interaction with adrenergic and muscarinic receptors. Binds to alpha-2b (ADRA2B) (IC(50)=2.3 nM), alpha-1a (ADRA1A), alpha-1b (ADRA1B), and alpha-2c (ADRA2C) adrenergic receptors. Reversibly binds to M1 (CHRM1) muscarinic acetylcholine receptors, probably by interacting with the orthosteric site. Also reveals a slightly weaker effect at M3 (CHRM3) and M4 (CHRM4) receptors. The order of potency is ADRA2B&gt;&gt;CHRM1&gt;ADRA1A&gt;ADRA1B&gt;ADRA2C/CHRM4. The protein is Muscarinic toxin 1 of Dendroaspis angusticeps (Eastern green mamba).